A 338-amino-acid chain; its full sequence is UDP-3-O-acylglucosamine N-acyltransferase (338 aa).

Residue histidine 239 is the Proton acceptor of the active site.

The protein belongs to the transferase hexapeptide repeat family. LpxD subfamily. Homotrimer.

It carries out the reaction a UDP-3-O-[(3R)-3-hydroxyacyl]-alpha-D-glucosamine + a (3R)-hydroxyacyl-[ACP] = a UDP-2-N,3-O-bis[(3R)-3-hydroxyacyl]-alpha-D-glucosamine + holo-[ACP] + H(+). The protein operates within bacterial outer membrane biogenesis; LPS lipid A biosynthesis. In terms of biological role, catalyzes the N-acylation of UDP-3-O-acylglucosamine using 3-hydroxyacyl-ACP as the acyl donor. Is involved in the biosynthesis of lipid A, a phosphorylated glycolipid that anchors the lipopolysaccharide to the outer membrane of the cell. The polypeptide is UDP-3-O-acylglucosamine N-acyltransferase (Xylella fastidiosa (strain 9a5c)).